The primary structure comprises 477 residues: Glutamyl-tRNA reductase (477 aa).

Substrate-binding positions include 49–52, serine 109, 114–116, and glutamine 120; these read TCNR and EQQ. Cysteine 50 functions as the Nucleophile in the catalytic mechanism. Position 189-194 (189-194) interacts with NADP(+); that stretch reads GAGAMG.

Belongs to the glutamyl-tRNA reductase family. Homodimer.

The enzyme catalyses (S)-4-amino-5-oxopentanoate + tRNA(Glu) + NADP(+) = L-glutamyl-tRNA(Glu) + NADPH + H(+). It participates in porphyrin-containing compound metabolism; protoporphyrin-IX biosynthesis; 5-aminolevulinate from L-glutamyl-tRNA(Glu): step 1/2. Catalyzes the NADPH-dependent reduction of glutamyl-tRNA(Glu) to glutamate 1-semialdehyde (GSA). This chain is Glutamyl-tRNA reductase, found in Nocardia farcinica (strain IFM 10152).